Reading from the N-terminus, the 141-residue chain is Nucleoside diphosphate kinase (141 aa).

ATP is bound by residues Lys-11, Phe-59, Arg-87, Thr-93, Arg-104, and Asn-114. The active-site Pros-phosphohistidine intermediate is His-117.

The protein belongs to the NDK family. As to quaternary structure, homotetramer. The cofactor is Mg(2+).

It is found in the cytoplasm. It catalyses the reaction a 2'-deoxyribonucleoside 5'-diphosphate + ATP = a 2'-deoxyribonucleoside 5'-triphosphate + ADP. It carries out the reaction a ribonucleoside 5'-diphosphate + ATP = a ribonucleoside 5'-triphosphate + ADP. Its function is as follows. Major role in the synthesis of nucleoside triphosphates other than ATP. The ATP gamma phosphate is transferred to the NDP beta phosphate via a ping-pong mechanism, using a phosphorylated active-site intermediate. This Acidovorax ebreus (strain TPSY) (Diaphorobacter sp. (strain TPSY)) protein is Nucleoside diphosphate kinase.